We begin with the raw amino-acid sequence, 558 residues long: CTP synthase (558 aa).

An amidoligase domain region spans residues 1–266; sequence MSAKYIFVTG…DRLVMKYLRL (266 aa). Ser-14 is a binding site for CTP. Ser-14 contacts UTP. Residues 15–20 and Asp-72 contribute to the ATP site; that span reads SLGKGL. Mg(2+)-binding residues include Asp-72 and Glu-140. CTP is bound by residues 147–149, 187–192, and Lys-223; these read DIE and KTKPTQ. UTP contacts are provided by residues 187–192 and Lys-223; that span reads KTKPTQ. 239-241 lines the ATP pocket; the sequence is KDV. In terms of domain architecture, Glutamine amidotransferase type-1 spans 291-537; the sequence is IIGIIGKYVE…IGASYEHRMK (247 aa). An L-glutamine-binding site is contributed by Gly-355. The active-site Nucleophile; for glutamine hydrolysis is the Cys-382. L-glutamine is bound by residues 383–386, Glu-406, and Arg-463; that span reads LGMQ. Residues His-510 and Glu-512 contribute to the active site. The disordered stretch occupies residues 539 to 558; it reads THTKEREEESVFLRPERVGK. The segment covering 542–558 has biased composition (basic and acidic residues); that stretch reads KEREEESVFLRPERVGK.

It belongs to the CTP synthase family. As to quaternary structure, homotetramer.

It carries out the reaction UTP + L-glutamine + ATP + H2O = CTP + L-glutamate + ADP + phosphate + 2 H(+). The catalysed reaction is L-glutamine + H2O = L-glutamate + NH4(+). It catalyses the reaction UTP + NH4(+) + ATP = CTP + ADP + phosphate + 2 H(+). It participates in pyrimidine metabolism; CTP biosynthesis via de novo pathway; CTP from UDP: step 2/2. Allosterically activated by GTP, when glutamine is the substrate; GTP has no effect on the reaction when ammonia is the substrate. The allosteric effector GTP functions by stabilizing the protein conformation that binds the tetrahedral intermediate(s) formed during glutamine hydrolysis. Inhibited by the product CTP, via allosteric rather than competitive inhibition. In terms of biological role, catalyzes the ATP-dependent amination of UTP to CTP with either L-glutamine or ammonia as the source of nitrogen. Regulates intracellular CTP levels through interactions with the four ribonucleotide triphosphates. The chain is CTP synthase from Koribacter versatilis (strain Ellin345).